Here is a 207-residue protein sequence, read N- to C-terminus: Cytochrome c oxidase subunit 3 (207 aa).

The next 5 helical transmembrane spans lie at 30-50 (FWLF…TFLA), 67-87 (VTLV…SVYA), 101-121 (LWLG…IYEF), 144-164 (LVGT…TLMI), and 186-206 (WHFI…MGMV).

It belongs to the cytochrome c oxidase subunit 3 family.

It is found in the cell membrane. The enzyme catalyses 4 Fe(II)-[cytochrome c] + O2 + 8 H(+)(in) = 4 Fe(III)-[cytochrome c] + 2 H2O + 4 H(+)(out). The sequence is that of Cytochrome c oxidase subunit 3 (ctaE) from Bacillus subtilis (strain 168).